We begin with the raw amino-acid sequence, 359 residues long: Type-1 angiotensin II receptor B (359 aa).

Over 1–25 (MTLNSSTEDGIKRIQDDCPKAGRHN) the chain is Extracellular. The N-linked (GlcNAc...) asparagine glycan is linked to asparagine 4. The angiotensin II site is built by glutamine 15 and aspartate 17. Cystine bridges form between cysteine 18-cysteine 274 and cysteine 101-cysteine 180. A helical membrane pass occupies residues 26-55 (YIFVMIPTLYSIIFVVGIFGNSLVVIVIYF). The Cytoplasmic portion of the chain corresponds to 56-61 (YMKLKT). The helical transmembrane segment at 62 to 89 (VASVFLLNLALADLCFLLTLPLWAVYTA) threads the bilayer. Residues 90 to 98 (MEYRWPFGN) are Extracellular-facing. The helical transmembrane segment at 99-125 (HLCKIASASVSFNLYASVFLLTCLSID) threads the bilayer. Topologically, residues 126-141 (RYLAIVHPMKSRLRRT) are cytoplasmic. Residues 142-165 (MLVAKVTCIIIWLMAGLASLPAVI) form a helical membrane-spanning segment. Over 166 to 190 (YRNVYFIENTNITVCAFHYESQNST) the chain is Extracellular. Arginine 167 is an angiotensin II binding site. The N-linked (GlcNAc...) asparagine glycan is linked to asparagine 176. The angiotensin II site is built by phenylalanine 182, histidine 183, and tyrosine 184. A glycan (N-linked (GlcNAc...) asparagine) is linked at asparagine 188. A helical transmembrane segment spans residues 191 to 216 (LPIGLGLTKNILGFVFPFLIILTSYT). Position 199 (lysine 199) interacts with angiotensin II. Over 217 to 239 (LIWKALKKAYKIQKNTPRNDDIF) the chain is Cytoplasmic. The helical transmembrane segment at 240–268 (RIIMAIVLFFFFSWVPHQIFTFLDVLIQL) threads the bilayer. Residues 269–278 (GIIRDCEIAD) lie on the Extracellular side of the membrane. The chain crosses the membrane as a helical span at residues 279–304 (IVDTAMPITICIAYFNNCLNPLFYGF). The Cytoplasmic segment spans residues 305–359 (LGKKFKKYFLQLLKYIPPTAKSHAGLSTKMSTLSYRPSDNMSSSAKKSASFFEVE). A disordered region spans residues 339–359 (YRPSDNMSSSAKKSASFFEVE). The segment covering 346-359 (SSSAKKSASFFEVE) has biased composition (low complexity).

It belongs to the G-protein coupled receptor 1 family. In terms of assembly, interacts with MAS1. Interacts with ARRB1. Interacts with FLNA (via filamin repeat 21); increases PKA-mediated phosphorylation of FLNA. Post-translationally, C-terminal Ser or Thr residues may be phosphorylated. As to expression, is expressed in the liver, kidney, aorta, lung, uterus, ovary, spleen, heart, and vascular smooth muscle cell. Expressed most abundantly in the adrenal gland.

It localises to the cell membrane. In terms of biological role, receptor for angiotensin II, a vasoconstricting peptide, which acts as a key regulator of blood pressure and sodium retention by the kidney. The activated receptor in turn couples to G-alpha proteins G(q) (GNAQ, GNA11, GNA14 or GNA15) and thus activates phospholipase C and increases the cytosolic Ca(2+) concentrations, which in turn triggers cellular responses such as stimulation of protein kinase C. In Rattus norvegicus (Rat), this protein is Type-1 angiotensin II receptor B (Agtr1b).